Here is a 277-residue protein sequence, read N- to C-terminus: 4-hydroxy-tetrahydrodipicolinate reductase (277 aa).

Gly9 to Met14 is a binding site for NAD(+). Lys37 lines the NADP(+) pocket. Gly75 to Ser77 provides a ligand contact to NAD(+). His132 serves as the catalytic Proton donor/acceptor. The active-site Proton donor is Lys136. Position 142-143 (Gly142–Thr143) interacts with (S)-2,3,4,5-tetrahydrodipicolinate. Positions Ser245–Ala277 are disordered.

Belongs to the DapB family.

It is found in the cytoplasm. The enzyme catalyses (S)-2,3,4,5-tetrahydrodipicolinate + NAD(+) + H2O = (2S,4S)-4-hydroxy-2,3,4,5-tetrahydrodipicolinate + NADH + H(+). The catalysed reaction is (S)-2,3,4,5-tetrahydrodipicolinate + NADP(+) + H2O = (2S,4S)-4-hydroxy-2,3,4,5-tetrahydrodipicolinate + NADPH + H(+). Its pathway is amino-acid biosynthesis; L-lysine biosynthesis via DAP pathway; (S)-tetrahydrodipicolinate from L-aspartate: step 4/4. Catalyzes the conversion of 4-hydroxy-tetrahydrodipicolinate (HTPA) to tetrahydrodipicolinate. The protein is 4-hydroxy-tetrahydrodipicolinate reductase of Clavibacter sepedonicus (Clavibacter michiganensis subsp. sepedonicus).